The sequence spans 881 residues: DNA mismatch repair protein MutS (881 aa).

Position 627 to 634 (glycine 627 to serine 634) interacts with ATP.

Belongs to the DNA mismatch repair MutS family.

Functionally, this protein is involved in the repair of mismatches in DNA. It is possible that it carries out the mismatch recognition step. This protein has a weak ATPase activity. This Acinetobacter baumannii (strain AB307-0294) protein is DNA mismatch repair protein MutS.